The primary structure comprises 238 residues: Ribonuclease PH (238 aa).

Residues Arg86 and 124 to 126 (GTR) contribute to the phosphate site.

Belongs to the RNase PH family. In terms of assembly, homohexameric ring arranged as a trimer of dimers.

It catalyses the reaction tRNA(n+1) + phosphate = tRNA(n) + a ribonucleoside 5'-diphosphate. Its function is as follows. Phosphorolytic 3'-5' exoribonuclease that plays an important role in tRNA 3'-end maturation. Removes nucleotide residues following the 3'-CCA terminus of tRNAs; can also add nucleotides to the ends of RNA molecules by using nucleoside diphosphates as substrates, but this may not be physiologically important. Probably plays a role in initiation of 16S rRNA degradation (leading to ribosome degradation) during starvation. The polypeptide is Ribonuclease PH (Agrobacterium fabrum (strain C58 / ATCC 33970) (Agrobacterium tumefaciens (strain C58))).